The primary structure comprises 135 residues: Sex-regulated protein janus-A (135 aa).

K37 is a substrate binding site. The active-site Proton acceptor is H63. Residue 104–106 participates in substrate binding; that stretch reads SQG.

The protein belongs to the janus family.

Functionally, janA and janB regulate somatic sex differentiation. This is Sex-regulated protein janus-A (janA) from Drosophila simulans (Fruit fly).